Reading from the N-terminus, the 202-residue chain is Glycerol-3-phosphate acyltransferase (202 aa).

6 helical membrane passes run Asn3 to Ala23, Ile61 to Leu81, Leu87 to Phe107, Gly118 to Ile138, Ile144 to Asn164, and Leu167 to Leu187.

This sequence belongs to the PlsY family. Probably interacts with PlsX.

The protein localises to the cell inner membrane. The enzyme catalyses an acyl phosphate + sn-glycerol 3-phosphate = a 1-acyl-sn-glycero-3-phosphate + phosphate. It participates in lipid metabolism; phospholipid metabolism. In terms of biological role, catalyzes the transfer of an acyl group from acyl-phosphate (acyl-PO(4)) to glycerol-3-phosphate (G3P) to form lysophosphatidic acid (LPA). This enzyme utilizes acyl-phosphate as fatty acyl donor, but not acyl-CoA or acyl-ACP. The sequence is that of Glycerol-3-phosphate acyltransferase from Campylobacter jejuni subsp. jejuni serotype O:23/36 (strain 81-176).